The primary structure comprises 51 residues: Large ribosomal subunit protein bL33 (51 aa).

The protein belongs to the bacterial ribosomal protein bL33 family.

This is Large ribosomal subunit protein bL33 from Alkalilimnicola ehrlichii (strain ATCC BAA-1101 / DSM 17681 / MLHE-1).